The primary structure comprises 325 residues: Reaction center protein M chain (325 aa).

The next 3 membrane-spanning stretches (helical) occupy residues 54-80 (LGPL…LASV), 111-140 (NDGG…RARA), and 143-168 (MGTH…RPVL). Positions 183 and 203 each coordinate (7R,8Z)-bacteriochlorophyll b. A helical membrane pass occupies residues 198–226 (FYNPFHALSIAFLYGATLLFAMHGATILA). The Fe cation site is built by histidine 220 and glutamate 235. A ubiquinone is bound at residue tryptophan 253. A helical membrane pass occupies residues 260-286 (NATTESIHRWAWWFAVLCPLCGGIGIL). Histidine 267 contacts Fe cation.

It belongs to the reaction center PufL/M/PsbA/D family. As to quaternary structure, reaction center is composed of four bacteriochlorophylls, two bacteriopheophytins, two ubiquinones, one iron, and three highly hydrophobic polypeptide chains (designated L, M, and H).

The protein resides in the cell inner membrane. Functionally, the reaction center is a membrane-bound complex that mediates the initial photochemical event in the electron transfer process of photosynthesis. In Rubrivivax gelatinosus (strain NBRC 100245 / IL144), this protein is Reaction center protein M chain (pufM).